We begin with the raw amino-acid sequence, 160 residues long: Nucleotide-binding protein TERTU_3542 (160 aa).

This sequence belongs to the YajQ family.

Nucleotide-binding protein. This Teredinibacter turnerae (strain ATCC 39867 / T7901) protein is Nucleotide-binding protein TERTU_3542.